Here is a 508-residue protein sequence, read N- to C-terminus: DNA polymerase II small subunit (508 aa).

A compositionally biased stretch (low complexity) spans 66–80 (ASSAAQTSAPASTPP). The segment at 66-122 (ASSAAQTSAPASTPPDEATTHTDPSATDTPPNHDGGRAATADARSVEIDGDMTGAST) is disordered. Positions 86 to 95 (HTDPSATDTP) are enriched in polar residues.

This sequence belongs to the DNA polymerase delta/II small subunit family. As to quaternary structure, heterodimer of a large subunit and a small subunit.

The enzyme catalyses DNA(n) + a 2'-deoxyribonucleoside 5'-triphosphate = DNA(n+1) + diphosphate. It carries out the reaction Exonucleolytic cleavage in the 3'- to 5'-direction to yield nucleoside 5'-phosphates.. In terms of biological role, possesses two activities: a DNA synthesis (polymerase) and an exonucleolytic activity that degrades single-stranded DNA in the 3' to 5' direction. Has a template-primer preference which is characteristic of a replicative DNA polymerase. This Halobacterium salinarum (strain ATCC 29341 / DSM 671 / R1) protein is DNA polymerase II small subunit.